The sequence spans 168 residues: Xanthine-guanine phosphoribosyltransferase (168 aa).

Residues 43–44 (RG) and 102–110 (DDLVDTGAT) contribute to the 5-phospho-alpha-D-ribose 1-diphosphate site. Residue D103 coordinates Mg(2+). D106 and I149 together coordinate guanine. 2 residues coordinate xanthine: D106 and I149. GMP contacts are provided by residues 106–110 (DTGAT) and 148–149 (WI).

It belongs to the purine/pyrimidine phosphoribosyltransferase family. XGPT subfamily. In terms of assembly, homotetramer. Requires Mg(2+) as cofactor.

It localises to the cell inner membrane. It carries out the reaction GMP + diphosphate = guanine + 5-phospho-alpha-D-ribose 1-diphosphate. The catalysed reaction is XMP + diphosphate = xanthine + 5-phospho-alpha-D-ribose 1-diphosphate. It catalyses the reaction IMP + diphosphate = hypoxanthine + 5-phospho-alpha-D-ribose 1-diphosphate. Its pathway is purine metabolism; GMP biosynthesis via salvage pathway; GMP from guanine: step 1/1. It functions in the pathway purine metabolism; XMP biosynthesis via salvage pathway; XMP from xanthine: step 1/1. Purine salvage pathway enzyme that catalyzes the transfer of the ribosyl-5-phosphate group from 5-phospho-alpha-D-ribose 1-diphosphate (PRPP) to the N9 position of the 6-oxopurines guanine and xanthine to form the corresponding ribonucleotides GMP (guanosine 5'-monophosphate) and XMP (xanthosine 5'-monophosphate), with the release of PPi. To a lesser extent, also acts on hypoxanthine. The sequence is that of Xanthine-guanine phosphoribosyltransferase from Nitrobacter winogradskyi (strain ATCC 25391 / DSM 10237 / CIP 104748 / NCIMB 11846 / Nb-255).